The chain runs to 676 residues: RNA helicase NPH-II (676 aa).

The Helicase ATP-binding domain occupies 172–347 (FSAWISHRPV…VFLPNPAFIH (176 aa)). 185 to 192 (GGTGVGKT) is a binding site for ATP. The DEXH box signature appears at 296 to 299 (DEVH). Residues 366-535 (NPSSRMAYIE…NYILYANKFN (170 aa)) form the Helicase C-terminal domain.

The protein belongs to the DEAD box helicase family. DEAH subfamily. As to quaternary structure, monomer.

It is found in the virion. The catalysed reaction is ATP + H2O = ADP + phosphate + H(+). Functionally, NTP-dependent helicase that catalyzes unidirectional unwinding of 3'tailed duplex RNAs and plays an important role during transcription of early mRNAs, presumably by preventing R-loop formation behind the elongating RNA polymerase. Might also play a role in the export of newly synthesized mRNA chains out of the core into the cytoplasm. Required for replication and propagation of viral particles. This chain is RNA helicase NPH-II (OPG084), found in Homo sapiens (Human).